The following is a 105-amino-acid chain: uncharacterized protein (105 aa).

A helical transmembrane segment spans residues 64 to 84 (ILLISIFFLLLFALPQHTMGI).

The protein resides in the membrane. This is an uncharacterized protein from Saccharomyces cerevisiae (strain ATCC 204508 / S288c) (Baker's yeast).